The following is a 433-amino-acid chain: D-amino acid dehydrogenase (433 aa).

3–17 (VVILGSGVVGVASAW) is a binding site for FAD.

This sequence belongs to the DadA oxidoreductase family. The cofactor is FAD.

The enzyme catalyses a D-alpha-amino acid + A + H2O = a 2-oxocarboxylate + AH2 + NH4(+). Its pathway is amino-acid degradation; D-alanine degradation; NH(3) and pyruvate from D-alanine: step 1/1. Functionally, oxidative deamination of D-amino acids. In Erwinia tasmaniensis (strain DSM 17950 / CFBP 7177 / CIP 109463 / NCPPB 4357 / Et1/99), this protein is D-amino acid dehydrogenase.